We begin with the raw amino-acid sequence, 207 residues long: Holliday junction branch migration complex subunit RuvA (207 aa).

A domain I region spans residues 1-63 (MIGMLKGRVE…QDAITLFGFL (63 aa)). A domain II region spans residues 64-142 (DARSKRMFLQ…VDKIETGEPT (79 aa)). The flexible linker stretch occupies residues 143-153 (STQRIPTDKGV). The domain III stretch occupies residues 153 to 207 (VEQVVEGLMSLGWKQADAQQAVDSVISSSGIALPLEEGNVPTVLRLALTSLDRGR).

The protein belongs to the RuvA family. In terms of assembly, homotetramer. Forms an RuvA(8)-RuvB(12)-Holliday junction (HJ) complex. HJ DNA is sandwiched between 2 RuvA tetramers; dsDNA enters through RuvA and exits via RuvB. An RuvB hexamer assembles on each DNA strand where it exits the tetramer. Each RuvB hexamer is contacted by two RuvA subunits (via domain III) on 2 adjacent RuvB subunits; this complex drives branch migration. In the full resolvosome a probable DNA-RuvA(4)-RuvB(12)-RuvC(2) complex forms which resolves the HJ.

It is found in the cytoplasm. Its function is as follows. The RuvA-RuvB-RuvC complex processes Holliday junction (HJ) DNA during genetic recombination and DNA repair, while the RuvA-RuvB complex plays an important role in the rescue of blocked DNA replication forks via replication fork reversal (RFR). RuvA specifically binds to HJ cruciform DNA, conferring on it an open structure. The RuvB hexamer acts as an ATP-dependent pump, pulling dsDNA into and through the RuvAB complex. HJ branch migration allows RuvC to scan DNA until it finds its consensus sequence, where it cleaves and resolves the cruciform DNA. This is Holliday junction branch migration complex subunit RuvA from Bifidobacterium animalis subsp. lactis (strain AD011).